A 203-amino-acid chain; its full sequence is uncharacterized protein (203 aa).

The Fe cation site is built by His34, Glu97, and His172.

Belongs to the hemerythrin family.

The protein localises to the mitochondrion. This is an uncharacterized protein from Schizosaccharomyces pombe (strain 972 / ATCC 24843) (Fission yeast).